We begin with the raw amino-acid sequence, 77 residues long: MVSTPELKKYMDKKILLNINGSRKVAGILRGYDIFLNVVLDDAMEINGEDPANNHQLGLQTVIRGNSIISLEALDAI.

One can recognise a Sm domain in the interval 2–77 (VSTPELKKYM…IISLEALDAI (76 aa)).

The protein belongs to the snRNP Sm proteins family. In terms of assembly, component of the Sm core complex, present in spliceosomal snRNP U1, U2, U4/U6 and U5. The core complex contains SMB1, SMD1, SMD2, SMD3, SME1, SMX3 and SMX2 (Sm proteins B, D1, D2, D3, E, F and G, respectively), and is probably a heptameric ring structure. SMX2 specifically interacts with SME1. Belongs to the CWC complex (or CEF1-associated complex), a spliceosome sub-complex reminiscent of a late-stage spliceosome composed of the U2, U5 and U6 snRNAs and at least BUD13, BUD31, BRR2, CDC40, CEF1, CLF1, CUS1, CWC2, CWC15, CWC21, CWC22, CWC23, CWC24, CWC25, CWC27, ECM2, HSH155, IST3, ISY1, LEA1, MSL1, NTC20, PRP8, PRP9, PRP11, PRP19, PRP21, PRP22, PRP45, PRP46, SLU7, SMB1, SMD1, SMD2, SMD3, SMX2, SMX3, SNT309, SNU114, SPP2, SYF1, SYF2, RSE1 and YJU2. Component of the U4/U6-U5 tri-snRNP complex composed of the U4, U6 and U5 snRNAs and at least PRP3, PRP4, PRP6, PRP8, PRP18, PRP31, PRP38, SNU13, SNU23, SNU66, SNU114, SPP381, SMB1, SMD1, SMD2, SMD3, SMX2, SMX3, LSM2, LSM3, LSM4, LSM5, LSM6, LSM7, LSM8, BRR2 and DIB1.

It localises to the nucleus. Its subcellular location is the cytoplasm. Plays a role in pre-mRNA splicing as a core component of the spliceosomal U1, U2, U4 and U5 small nuclear ribonucleoproteins (snRNPs), the building blocks of the spliceosome. The polypeptide is Small nuclear ribonucleoprotein G (SMX2) (Saccharomyces cerevisiae (strain ATCC 204508 / S288c) (Baker's yeast)).